The following is a 154-amino-acid chain: Large ribosomal subunit protein uL22c (154 aa).

This sequence belongs to the universal ribosomal protein uL22 family. As to quaternary structure, part of the 50S ribosomal subunit.

It localises to the plastid. The protein resides in the chloroplast. In terms of biological role, this protein binds specifically to 23S rRNA. The globular domain of the protein is located near the polypeptide exit tunnel on the outside of the subunit, while an extended beta-hairpin is found that lines the wall of the exit tunnel in the center of the 70S ribosome. This is Large ribosomal subunit protein uL22c (rpl22) from Jasminum nudiflorum (Winter jasmine).